Reading from the N-terminus, the 253-residue chain is Major prion protein (253 aa).

The signal sequence occupies residues 1–22 (MANLGCWMLVLFVATWSDLGLC). An interaction with ADGRG6 region spans residues 23–38 (KKRPKPGGWNTGGSRY). Positions 23 to 230 (KKRPKPGGWN…ESQAYYQRGS (208 aa)) are interaction with GRB2, ERI3 and SYN1. The interval 26–108 (PKPGGWNTGG…WNKPSKPKTS (83 aa)) is disordered. 5 tandem repeats follow at residues 51 to 59 (PQGGGGWGQ), 60 to 67 (PHGGGWGQ), 68 to 75 (PHGGGWGQ), 76 to 83 (PHGGGWGQ), and 84 to 91 (PHGGGWGQ). Residues 51-91 (PQGGGGWGQPHGGGWGQPHGGGWGQPHGGGWGQPHGGGWGQ) form a 5 X 8 AA tandem repeats of P-H-G-G-G-W-G-Q region. A compositionally biased stretch (gly residues) spans 52 to 95 (QGGGGWGQPHGGGWGQPHGGGWGQPHGGGWGQPHGGGWGQGGGT). Cu(2+) contacts are provided by His-61, Gly-62, Gly-63, His-69, Gly-70, Gly-71, His-77, Gly-78, Gly-79, His-85, Gly-86, and Gly-87. A disulfide bridge links Cys-179 with Cys-214. N-linked (GlcNAc...) asparagine glycosylation is found at Asn-181 and Asn-197. Ser-230 carries GPI-anchor amidated serine lipidation. The propeptide at 231 to 253 (SMVLFSSPPVILLISFLIFLIVG) is removed in mature form.

This sequence belongs to the prion family. As to quaternary structure, monomer and homodimer. Has a tendency to aggregate into amyloid fibrils containing a cross-beta spine, formed by a steric zipper of superposed beta-strands. Soluble oligomers may represent an intermediate stage on the path to fibril formation. Copper binding may promote oligomerization. Interacts with GRB2, APP, ERI3/PRNPIP and SYN1. Mislocalized cytosolically exposed PrP interacts with MGRN1; this interaction alters MGRN1 subcellular location and causes lysosomal enlargement. Interacts with APP. Interacts with KIAA1191. Interacts with ADGRG6.

The protein localises to the cell membrane. The protein resides in the golgi apparatus. Its primary physiological function is unclear. May play a role in neuronal development and synaptic plasticity. May be required for neuronal myelin sheath maintenance. May promote myelin homeostasis through acting as an agonist for ADGRG6 receptor. May play a role in iron uptake and iron homeostasis. Soluble oligomers are toxic to cultured neuroblastoma cells and induce apoptosis (in vitro). Association with GPC1 (via its heparan sulfate chains) targets PRNP to lipid rafts. Also provides Cu(2+) or Zn(2+) for the ascorbate-mediated GPC1 deaminase degradation of its heparan sulfate side chains. This is Major prion protein (PRNP) from Colobus guereza (Mantled guereza).